Here is a 149-residue protein sequence, read N- to C-terminus: Large ribosomal subunit protein bL9 (149 aa).

Belongs to the bacterial ribosomal protein bL9 family.

Functionally, binds to the 23S rRNA. In Aliivibrio fischeri (strain ATCC 700601 / ES114) (Vibrio fischeri), this protein is Large ribosomal subunit protein bL9.